A 191-amino-acid polypeptide reads, in one-letter code: Signal peptidase IB (191 aa).

Topologically, residues 1-7 (MKKELLE) are cytoplasmic. A helical membrane pass occupies residues 8–28 (WIISIAVAFVILFIVGKFIVT). The Extracellular segment spans residues 29 to 191 (PYTIKGESMD…HNFNPENTKN (163 aa)). Catalysis depends on residues S36 and K77.

It belongs to the peptidase S26 family.

It is found in the cell membrane. The catalysed reaction is Cleavage of hydrophobic, N-terminal signal or leader sequences from secreted and periplasmic proteins.. Essential for cell viability. The sequence is that of Signal peptidase IB (spsB) from Staphylococcus aureus (strain Mu50 / ATCC 700699).